A 347-amino-acid chain; its full sequence is Isopentenyl-diphosphate delta-isomerase (347 aa).

Substrate is bound at residue 9 to 10; that stretch reads RK. FMN is bound by residues Ser-67, 68-70, Ser-98, and Asn-127; that span reads SMT. Residue 98–100 participates in substrate binding; that stretch reads SQR. Residue Gln-162 participates in substrate binding. Position 163 (Glu-163) interacts with Mg(2+). Residues Lys-194, Thr-224, 274-276, and 295-296 each bind FMN; these read GIK and AA.

The protein belongs to the IPP isomerase type 2 family. As to quaternary structure, homooctamer. Dimer of tetramers. It depends on FMN as a cofactor. Requires NADPH as cofactor. Mg(2+) is required as a cofactor.

It is found in the cytoplasm. The enzyme catalyses isopentenyl diphosphate = dimethylallyl diphosphate. In terms of biological role, involved in the biosynthesis of isoprenoids. Catalyzes the 1,3-allylic rearrangement of the homoallylic substrate isopentenyl (IPP) to its allylic isomer, dimethylallyl diphosphate (DMAPP). This chain is Isopentenyl-diphosphate delta-isomerase, found in Pseudescherichia vulneris (Escherichia vulneris).